Reading from the N-terminus, the 632-residue chain is MPYPFSISPHDMEEHLVQEDKGPVLRFITCGSVDDGKSTLIGRLLCDAQLVFEDQLADLRHGGIRGGNGEEIDFSLVLDGLEAEREQGITIDVAYRYFSTSKRKFIVADTPGHFEYTRNMATGASTADLAVILVDSRQGILQQTRRHSYLASLLGIRHVVLAVNKIDLIDFSEPIFDAIVAEYVRFSAKLGFASVMAIPMSARFGDNVVSKSGKLPWYQGSPLLEYLETVELDAPDRQEPFRFPVQLVMRPNADFRGYAGRIASGKIAVGDPVIVAKSGLRSSVRAIIAPDGNQISAAEGEPVTLVLADEVDVSRGDMLVDPASRPFVSDQFQAHLIWFDANPMLPGRSYLLRTETDSVSATVTVLKHQLNVDSFVREPAKLLQMNEVGVCNIMTQRPIVFDAYKENRSTGNFIIVDRVSSATVGAGMIDFPLRRADNVHWQALDVDKAARSALKNQKPAVLWLTGLSGSGKSTIANALEALLHTCGKHTYLLDGDNVRHGLNRDLGFTAVDRVENIRRVAEVAKLMADAGLIVICSFISPFRDERRMARELMGEGEFIEIFVDTPLDECARRDPKGLYKKAFAGNIANFTGVSSPYEAPENPELHLKTMGQEPARLALQIEEFLRSRMEEK.

A sulfate adenylyltransferase region spans residues 1 to 457; sequence MPYPFSISPH…KAARSALKNQ (457 aa). A tr-type G domain is found at 22 to 236; it reads GPVLRFITCG…LETVELDAPD (215 aa). The segment at 31-38 is G1; the sequence is GSVDDGKS. 31-38 serves as a coordination point for GTP; it reads GSVDDGKS. A G2 region spans residues 88-92; sequence GITID. Residues 109 to 112 form a G3 region; the sequence is DTPG. GTP-binding positions include 109 to 113 and 164 to 167; these read DTPGH and NKID. The tract at residues 164 to 167 is G4; it reads NKID. The G5 stretch occupies residues 187 to 189; that stretch reads SAK. Positions 458–632 are adenylyl-sulfate kinase; it reads KPAVLWLTGL…EFLRSRMEEK (175 aa). Residue 466 to 473 participates in ATP binding; it reads GLSGSGKS. The active-site Phosphoserine intermediate is the Ser-540.

This sequence in the C-terminal section; belongs to the APS kinase family. In the N-terminal section; belongs to the TRAFAC class translation factor GTPase superfamily. Classic translation factor GTPase family. CysN/NodQ subfamily. Sulfate-activating enzymes, NodP and NodQ, may be physically associated.

The enzyme catalyses sulfate + ATP + H(+) = adenosine 5'-phosphosulfate + diphosphate. The catalysed reaction is adenosine 5'-phosphosulfate + ATP = 3'-phosphoadenylyl sulfate + ADP + H(+). Proposed to provide activated sulfate for transfer to Nod factor. ATP sulfurylase may be the GTPase, regulating ATP sulfurylase activity. Its function is as follows. APS kinase catalyzes the synthesis of activated sulfate. The sequence is that of Bifunctional enzyme NodQ (nodQ) from Rhizobium tropici.